The following is a 253-amino-acid chain: Lys-63-specific deubiquitinase BRCC36 (253 aa).

Residues 9-145 (VELQTDVYMV…KEHEIFLNCF (137 aa)) enclose the MPN domain. Zn(2+)-binding residues include His-94, His-96, and Asp-107. Residues 94–107 (HSHPHITVCPSHVD) carry the JAMM motif motif. Positions 227 to 249 (EKRIALNKLRATHLQRQLQELQK) form a coiled coil.

It belongs to the peptidase M67A family. BRCC36 subfamily. Component of the BRISC complex, at least composed of ABRAXAS2, BRCC3/BRCC36, BABAM2 and BABAM1/NBA1. Within the complex, interacts directly with ABRAXAS2. The heterodimer with ABRAXAS2 assembles into a heterotetramer. The BRISC complex binds polyubiquitin. Zn(2+) serves as cofactor.

Its subcellular location is the cytoplasm. It localises to the nucleus. The protein resides in the cytoskeleton. It is found in the spindle pole. Its function is as follows. Metalloprotease that specifically cleaves 'Lys-63'-linked polyubiquitin chains, leaving the last ubiquitin chain attached to its substrates. Catalytic subunit of the BRISC complex; does not have activity by itself, but needs to be associated into a heterotetramer with ABRAXAS2 for minimal in vitro activity. Plays a role in regulating the onset of apoptosis via its role in modulating 'Lys-63'-linked ubiquitination of target proteins. Required for normal mitotic spindle assembly and microtubule attachment to kinetochores via its role in deubiquitinating spindle assembly factors. The chain is Lys-63-specific deubiquitinase BRCC36 from Camponotus floridanus (Florida carpenter ant).